Consider the following 768-residue polypeptide: Calcium up-regulated protein G (768 aa).

The interval M1–T22 is disordered. 2 Ricin B-type lectin domains span residues M1–D107 and K100–N248.

It belongs to the cup family.

It localises to the cytoplasm. The protein localises to the membrane. Its function is as follows. May play an important role in stabilizing and/or regulating the cell membrane during Ca(2+) stress or certain stages of development. The polypeptide is Calcium up-regulated protein G (cupG) (Dictyostelium discoideum (Social amoeba)).